An 862-amino-acid polypeptide reads, in one-letter code: MEKNITPMMRQYLDIKKKYKDAIIFFRVGSFYEMFFDDAIEASKLLNLTLTKRENVPMCGVPYHTSKEYIRKLILFDKKVAICEQASNLTSTGPLEREVVEVITPGVIVDEDFLNDDVNNYLVAISDYKNYYSFSYIDLSTSSLGVMFYENSFFEKLKRDLEKYSPKEIIVSENFYYQYLHKLNLSRFLINRVPAWHLDKDIAIKTIKEHFNILGLSSLGFDEEKPYYISIFLIINHIKNNLKNLLSNIDKIDINNDSSYMFLDDVTQVNLELVKNNNDFSSQYSLYSVLNDCKTAMGKRLLREFILNPILNISEINTRLDHVEFFYKNISLTMTLREAFINIWDIERIISRIQMKRYIKKDFLFIEKALSVFFLVKKLFDKHNFDYWNFDKFEEDSVSKVYFLINSAISDSSDELIKRGYDLKLDNLKDLKINANKYIDEYLESERILSKINNLKIRKTNNRGLFFEVTKSNYSQVPSHFMESQTLSSSKRYKTEKLISLEVDINNAEDSVVAFEQEIFDEIAANVVKHNKVLKKVAEFFAYIDLVVNFGYLAKKNEYKRPVLTSDKEIFLDKSRHPVVEHYVKNAEIFTENFVRINKERHFCLITGPNMAGKSTYLRQVALITLMAHIGSFVPASKALIGITDKIFCRIGASDNLAKGESTFLVEMNETANILRNATEKSLIIMDEVGRGTSTNDGLAIAYSIIEYILEYIKARSLFATHFHELSAINHKAFINLSMKIEKQGNDLVFLREIEEKPSLNSYGIYVARIAGLPLKVIDRANAILESLLSRKGSSFLEFLPYISSDSNDKEALKNDTDVNVKLNEYLELKNFISNIDINNITPFQSIELLNQIVLKVISQSS.

608 to 615 (GPNMAGKS) contributes to the ATP binding site.

It belongs to the DNA mismatch repair MutS family.

Functionally, this protein is involved in the repair of mismatches in DNA. It is possible that it carries out the mismatch recognition step. This protein has a weak ATPase activity. This is DNA mismatch repair protein MutS from Borrelia garinii subsp. bavariensis (strain ATCC BAA-2496 / DSM 23469 / PBi) (Borreliella bavariensis).